Here is a 433-residue protein sequence, read N- to C-terminus: Serine hydroxymethyltransferase (433 aa).

Residues Leu121 and 125–127 (GHI) each bind (6S)-5,6,7,8-tetrahydrofolate. An N6-(pyridoxal phosphate)lysine modification is found at Lys231.

Belongs to the SHMT family. As to quaternary structure, homodimer. Requires pyridoxal 5'-phosphate as cofactor.

The protein resides in the cytoplasm. It participates in amino-acid biosynthesis; glycine biosynthesis; glycine from L-serine: step 1/1. Functionally, catalyzes the reversible interconversion of serine and glycine with a modified folate serving as the one-carbon carrier. Also exhibits a pteridine-independent aldolase activity toward beta-hydroxyamino acids, producing glycine and aldehydes, via a retro-aldol mechanism. This chain is Serine hydroxymethyltransferase, found in Picrophilus torridus (strain ATCC 700027 / DSM 9790 / JCM 10055 / NBRC 100828 / KAW 2/3).